Consider the following 622-residue polypeptide: MLFYSFVWSVLAASVALAKTHKLNYTASWVTANPDGLHEKRMIGFNGEWPLPDIHVEKGDRVELYLTNGFQDNTATSLHFHGLFQNTSLGNQLQMDGPSMVTQCPIVPGQTYLYNFTVPEQVGTFWYHAHMGAQYGDGMRGAFIIHDPEEPFEYDHERVITLSDHYHENYKTVTKEFLSRYNPTGAEPIPQNILFNNTMNVTLDFTPGETYLFRFLNVGLFVSQYIILEDHEMSIVEVDGVYVKPNFTDSIYLSAGQRMSVLIKAKDKMPTRNYAMMQIMDETMLDVVPPELQLNQTIQMRYGHSLPEARALNIEDCDLDRATNDFYLEPLIERDLLAHYDHQIVMDVRMVNLGDGVKYAFFNNITYVTPKVPTLTTLLTSGKLASDPRIYGDNINAQLLKHNDIIEVVLNNYDSGRHPFHLHGHNFQIVQKSPGFHVDEAYDESEQDEMTVPYNESAPLQPFPERPMVRDTVVLEPSGHVVLRFRADNPGVWYFHCHVDWHLQQGLASVFIEAPVLLQEREKLNENYLDICKAADIPVVGNAAGHSNDWFDLKGLPRQPEPLPKGFTTEGYLALIISTIIGVWGLYSIAQYGIGEVIPNDEKVYHTLREILAENEIEVSRG.

An N-terminal signal peptide occupies residues 1–18 (MLFYSFVWSVLAASVALA). Residues 19-573 (KTHKLNYTAS…PKGFTTEGYL (555 aa)) lie on the Extracellular side of the membrane. A glycan (N-linked (GlcNAc...) asparagine) is linked at asparagine 24. Plastocyanin-like domains are found at residues 43-146 (IGFN…FIIH) and 192-301 (NILF…IQMR). Residues histidine 79 and histidine 81 each coordinate Cu cation. N-linked (GlcNAc...) asparagine glycans are attached at residues asparagine 86 and asparagine 115. Cu cation is bound by residues histidine 128 and histidine 130. N-linked (GlcNAc...) asparagine glycans are attached at residues asparagine 196, asparagine 200, asparagine 246, asparagine 295, and asparagine 364. Residues 392–514 (GDNINAQLLK…QGLASVFIEA (123 aa)) enclose the Plastocyanin-like 3 domain. 3 residues coordinate Cu cation: histidine 418, histidine 421, and histidine 423. The N-linked (GlcNAc...) asparagine glycan is linked to asparagine 455. Cu cation is bound by residues histidine 496, cysteine 497, histidine 498, and histidine 502. A helical transmembrane segment spans residues 574-594 (ALIISTIIGVWGLYSIAQYGI). Topologically, residues 595–622 (GEVIPNDEKVYHTLREILAENEIEVSRG) are cytoplasmic.

It belongs to the multicopper oxidase family. Interacts with FTH1. Cu cation serves as cofactor.

The protein resides in the cell membrane. Its function is as follows. Iron transport multicopper oxidase, which is required for Fe(2+) high affinity uptake. May be required to oxidize Fe(2+) and release it from the transporter. Essential component of copper-dependent iron transport. The chain is Iron transport multicopper oxidase FET5 (FET5) from Saccharomyces cerevisiae (strain ATCC 204508 / S288c) (Baker's yeast).